Consider the following 366-residue polypeptide: UDP-N-acetylglucosamine--N-acetylmuramyl-(pentapeptide) pyrophosphoryl-undecaprenol N-acetylglucosamine transferase (366 aa).

Residues Thr10–Gly12, Asn124, Arg166, Ser196, and Gln296 contribute to the UDP-N-acetyl-alpha-D-glucosamine site.

The protein belongs to the glycosyltransferase 28 family. MurG subfamily.

The protein localises to the cell membrane. The enzyme catalyses di-trans,octa-cis-undecaprenyl diphospho-N-acetyl-alpha-D-muramoyl-L-alanyl-D-glutamyl-meso-2,6-diaminopimeloyl-D-alanyl-D-alanine + UDP-N-acetyl-alpha-D-glucosamine = di-trans,octa-cis-undecaprenyl diphospho-[N-acetyl-alpha-D-glucosaminyl-(1-&gt;4)]-N-acetyl-alpha-D-muramoyl-L-alanyl-D-glutamyl-meso-2,6-diaminopimeloyl-D-alanyl-D-alanine + UDP + H(+). It participates in cell wall biogenesis; peptidoglycan biosynthesis. Cell wall formation. Catalyzes the transfer of a GlcNAc subunit on undecaprenyl-pyrophosphoryl-MurNAc-pentapeptide (lipid intermediate I) to form undecaprenyl-pyrophosphoryl-MurNAc-(pentapeptide)GlcNAc (lipid intermediate II). This chain is UDP-N-acetylglucosamine--N-acetylmuramyl-(pentapeptide) pyrophosphoryl-undecaprenol N-acetylglucosamine transferase, found in Alkaliphilus oremlandii (strain OhILAs) (Clostridium oremlandii (strain OhILAs)).